The chain runs to 423 residues: MQNNYLSQLRFSDLPLHHQVLAALQEKGFDYCTPIQALSLPMSLAGKDVAGQAQTGTGKTMAFLTATFHHLLTQQGDKGGRQPRALILAPTRELAVQINNDAALLTKATGLKTGLAYGGDGYEKQLKAIEQGVDILIGTTGRVIDYVKQGIVRLDKIQVVVLDEADRMFDLGFIKDIRYLLRKCPAPQHRLTMLFSATLSYKVRELAFEDMNDPEYVEIEPLQKTGHRIKEELFYPSNQDKMALLLTLLEEEWPERCIIFANTKHRCEDIWGYLAADGHRVGLLTGDVAQKKRLSLLKQFTEGHLDILVATDVAARGLHISDVSHVFNYDLPDDREDYVHRIGRTGRAGESGVSISFACEEYAMNLPAIEEYISHSIPVSQYDVAALLTLPKPYRIKRGNNNSKNSANSNRTFQKKRSLKRNF.

Residues 9-37 (LRFSDLPLHHQVLAALQEKGFDYCTPIQA) carry the Q motif motif. The Helicase ATP-binding domain maps to 40–217 (LPMSLAGKDV…FEDMNDPEYV (178 aa)). 53-60 (AQTGTGKT) is a binding site for ATP. The DEAD box signature appears at 163-166 (DEAD). Residues 241–388 (KMALLLTLLE…VSQYDVAALL (148 aa)) form the Helicase C-terminal domain. Residues 397–423 (KRGNNNSKNSANSNRTFQKKRSLKRNF) form a disordered region. The segment covering 400–410 (NNNSKNSANSN) has biased composition (low complexity). Positions 413 to 423 (FQKKRSLKRNF) are enriched in basic residues.

It belongs to the DEAD box helicase family. RhlB subfamily. In terms of assembly, component of the RNA degradosome, which is a multiprotein complex involved in RNA processing and mRNA degradation.

The protein resides in the cytoplasm. The enzyme catalyses ATP + H2O = ADP + phosphate + H(+). Its function is as follows. DEAD-box RNA helicase involved in RNA degradation. Has RNA-dependent ATPase activity and unwinds double-stranded RNA. This Pasteurella multocida (strain Pm70) protein is ATP-dependent RNA helicase RhlB.